Consider the following 133-residue polypeptide: Small ribosomal subunit protein uS12c (133 aa).

The protein belongs to the universal ribosomal protein uS12 family. In terms of assembly, part of the 30S ribosomal subunit.

Its subcellular location is the plastid. The protein resides in the chloroplast. Its function is as follows. With S4 and S5 plays an important role in translational accuracy. Located at the interface of the 30S and 50S subunits. The protein is Small ribosomal subunit protein uS12c (rps12) of Chlamydomonas reinhardtii (Chlamydomonas smithii).